The chain runs to 897 residues: Translation initiation factor IF-2 (897 aa).

Residues 52–310 (EHGSAPDKLT…LLQQGFQKPA (259 aa)) are disordered. A compositionally biased stretch (polar residues) spans 68-82 (STLNVPGTGGKSKSV). Composition is skewed to basic and acidic residues over residues 85 to 159 (EVRK…KDKV) and 166 to 217 (EMTK…ENEK). Residues 256 to 272 (GRTRTASKTARPQKKGN) show a composition bias toward basic residues. Over residues 273 to 286 (KHAESKADREEARA) the composition is skewed to basic and acidic residues. Positions 396-565 (PRAPVVTIMG…LLQAEVLELK (170 aa)) constitute a tr-type G domain. Residues 405–412 (GHVDHGKT) are G1. Residue 405-412 (GHVDHGKT) participates in GTP binding. Residues 430-434 (GITQH) form a G2 region. The segment at 451-454 (DTPG) is G3. GTP-binding positions include 451–455 (DTPGH) and 505–508 (NKID). A G4 region spans residues 505-508 (NKID). The tract at residues 541 to 543 (SAK) is G5.

Belongs to the TRAFAC class translation factor GTPase superfamily. Classic translation factor GTPase family. IF-2 subfamily.

It is found in the cytoplasm. One of the essential components for the initiation of protein synthesis. Protects formylmethionyl-tRNA from spontaneous hydrolysis and promotes its binding to the 30S ribosomal subunits. Also involved in the hydrolysis of GTP during the formation of the 70S ribosomal complex. This chain is Translation initiation factor IF-2 (infB), found in Enterobacter cloacae.